The sequence spans 255 residues: Dehydrogenase/reductase SDR family member 11 (255 aa).

A signal peptide spans 1 to 23 (MERWTGRVALVTGASVGIGAAVA). NADP(+)-binding positions include 13 to 18 (GASVGI), 38 to 39 (RS), Glu44, 65 to 66 (DL), and Asn92. Substrate-binding residues include Ser146 and Tyr161. NADP(+) is bound by residues Tyr161, Lys165, 196–199 (VETG), and Lys203. Catalysis depends on Tyr161, which acts as the Proton acceptor.

Belongs to the short-chain dehydrogenases/reductases (SDR) family.

The protein localises to the secreted. It catalyses the reaction a 3beta-hydroxysteroid + NADP(+) = a 3-oxosteroid + NADPH + H(+). The enzyme catalyses 17beta-estradiol + NAD(+) = estrone + NADH + H(+). It carries out the reaction 17beta-estradiol + NADP(+) = estrone + NADPH + H(+). Its pathway is steroid biosynthesis; estrogen biosynthesis. Inhibited by flavonoids including apigenin, luteolin, genistein, kaempferol and quercetin and also by carbenoxolone, zearalenone, glycyrrhetinic, curcumin and flufenamic acid. Functionally, catalyzes the conversion of the 17-keto group of estrone, 4- and 5-androstenes and 5-alpha-androstanes into their 17-beta-hydroxyl metabolites and the conversion of the 3-keto group of 3-, 3,17- and 3,20- diketosteroids into their 3-hydroxyl metabolites. Exhibits reductive 3-beta-hydroxysteroid dehydrogenase activity toward 5-beta-androstanes, 5-beta-pregnanes, 4-pregnenes and bile acids. May also reduce endogenous and exogenous alpha-dicarbonyl compounds and xenobiotic alicyclic ketones. This chain is Dehydrogenase/reductase SDR family member 11 (DHRS11), found in Gallus gallus (Chicken).